Here is a 290-residue protein sequence, read N- to C-terminus: Lipoyl synthase (290 aa).

The [4Fe-4S] cluster site is built by C38, C43, C49, C64, C68, C71, and S277. The Radical SAM core domain maps to 50-266 (WSKGTATFLL…REIALDAGFR (217 aa)).

It belongs to the radical SAM superfamily. Lipoyl synthase family. Requires [4Fe-4S] cluster as cofactor.

The protein localises to the cytoplasm. It catalyses the reaction [[Fe-S] cluster scaffold protein carrying a second [4Fe-4S](2+) cluster] + N(6)-octanoyl-L-lysyl-[protein] + 2 oxidized [2Fe-2S]-[ferredoxin] + 2 S-adenosyl-L-methionine + 4 H(+) = [[Fe-S] cluster scaffold protein] + N(6)-[(R)-dihydrolipoyl]-L-lysyl-[protein] + 4 Fe(3+) + 2 hydrogen sulfide + 2 5'-deoxyadenosine + 2 L-methionine + 2 reduced [2Fe-2S]-[ferredoxin]. Its pathway is protein modification; protein lipoylation via endogenous pathway; protein N(6)-(lipoyl)lysine from octanoyl-[acyl-carrier-protein]: step 2/2. In terms of biological role, catalyzes the radical-mediated insertion of two sulfur atoms into the C-6 and C-8 positions of the octanoyl moiety bound to the lipoyl domains of lipoate-dependent enzymes, thereby converting the octanoylated domains into lipoylated derivatives. This Chlorobaculum tepidum (strain ATCC 49652 / DSM 12025 / NBRC 103806 / TLS) (Chlorobium tepidum) protein is Lipoyl synthase.